Reading from the N-terminus, the 782-residue chain is Endonuclease MutS2 (782 aa).

Glycine 336–threonine 343 serves as a coordination point for ATP. In terms of domain architecture, Smr spans leucine 707–lysine 782.

Belongs to the DNA mismatch repair MutS family. MutS2 subfamily. In terms of assembly, homodimer. Binds to stalled ribosomes, contacting rRNA.

Its function is as follows. Endonuclease that is involved in the suppression of homologous recombination and thus may have a key role in the control of bacterial genetic diversity. Acts as a ribosome collision sensor, splitting the ribosome into its 2 subunits. Detects stalled/collided 70S ribosomes which it binds and splits by an ATP-hydrolysis driven conformational change. Acts upstream of the ribosome quality control system (RQC), a ribosome-associated complex that mediates the extraction of incompletely synthesized nascent chains from stalled ribosomes and their subsequent degradation. Probably generates substrates for RQC. The chain is Endonuclease MutS2 from Staphylococcus saprophyticus subsp. saprophyticus (strain ATCC 15305 / DSM 20229 / NCIMB 8711 / NCTC 7292 / S-41).